The following is a 261-amino-acid chain: Acyl-[acyl-carrier-protein]--UDP-N-acetylglucosamine O-acyltransferase (261 aa).

The protein belongs to the transferase hexapeptide repeat family. LpxA subfamily. In terms of assembly, homotrimer.

The protein resides in the cytoplasm. It catalyses the reaction a (3R)-hydroxyacyl-[ACP] + UDP-N-acetyl-alpha-D-glucosamine = a UDP-3-O-[(3R)-3-hydroxyacyl]-N-acetyl-alpha-D-glucosamine + holo-[ACP]. It participates in glycolipid biosynthesis; lipid IV(A) biosynthesis; lipid IV(A) from (3R)-3-hydroxytetradecanoyl-[acyl-carrier-protein] and UDP-N-acetyl-alpha-D-glucosamine: step 1/6. In terms of biological role, involved in the biosynthesis of lipid A, a phosphorylated glycolipid that anchors the lipopolysaccharide to the outer membrane of the cell. This is Acyl-[acyl-carrier-protein]--UDP-N-acetylglucosamine O-acyltransferase from Sulfurimonas denitrificans (strain ATCC 33889 / DSM 1251) (Thiomicrospira denitrificans (strain ATCC 33889 / DSM 1251)).